The primary structure comprises 540 residues: MTLKSLPAWTALQSHFEQIRHARLRDWFAPENDRAPTRAERFTIPGGGLAADFSKNRIDDETVRLLVQLARDAGVEARRDAMFAGEIVNPTEGRAALHTALRATDPQAPFHAQVSAERAKMATFARAVRSGTWTGYTGKRIRHVINIGIGGSDLGPKMVVHALHHVATPEISTHFVSNVDGADLARVLEQVDPEETLAIIVSKTFTTLETMTNARSLRDWFVARGCPEDALAKHFVGVSANPAEVVKFGIAADNVFEMWDWVGGRYSLWSAVGLSIMIAVGPEQFDELLAGANDMDRHFREAPLERNLPVLLGLIGIWYRNFFGSQSYLVAPYSEALHYLPSYLQQLEMESNGKSARLDGTFVDYPTSAVTWGEPGTNGQHAFFQMLHQGPTIVPIDFIAVLTPEHPLASHHPKLLANCFAQSEALMLGRTLEEARKVAGPGKEALAPHLTFPGNRPTTTLLVDALTPRALGALIALYEHKVLVQATVWDINPFDQWGVELGKILGKVVEADLSAESVDPAKHDSSTTALIERARAALKR.

The Proton donor role is filled by Glu-350. Catalysis depends on residues His-381 and Lys-503.

It belongs to the GPI family.

The protein resides in the cytoplasm. The catalysed reaction is alpha-D-glucose 6-phosphate = beta-D-fructose 6-phosphate. Its pathway is carbohydrate biosynthesis; gluconeogenesis. It functions in the pathway carbohydrate degradation; glycolysis; D-glyceraldehyde 3-phosphate and glycerone phosphate from D-glucose: step 2/4. Its function is as follows. Catalyzes the reversible isomerization of glucose-6-phosphate to fructose-6-phosphate. The protein is Glucose-6-phosphate isomerase of Burkholderia cenocepacia (strain ATCC BAA-245 / DSM 16553 / LMG 16656 / NCTC 13227 / J2315 / CF5610) (Burkholderia cepacia (strain J2315)).